Consider the following 508-residue polypeptide: Mitochondrial distribution and morphology protein 10 (508 aa).

Residues 160–195 are disordered; sequence PAHPTSTRPTPPQTPPSHTRQPSEPSTPAPSPTPGN.

It belongs to the MDM10 family. In terms of assembly, component of the ER-mitochondria encounter structure (ERMES) or MDM complex, composed of MMM1, MDM10, MDM12 and MDM34. Associates with the mitochondrial outer membrane sorting assembly machinery SAM(core) complex.

The protein localises to the mitochondrion outer membrane. In terms of biological role, component of the ERMES/MDM complex, which serves as a molecular tether to connect the endoplasmic reticulum and mitochondria. Components of this complex are involved in the control of mitochondrial shape and protein biogenesis and may function in phospholipid exchange. MDM10 is involved in the late assembly steps of the general translocase of the mitochondrial outer membrane (TOM complex). Functions in the TOM40-specific route of the assembly of outer membrane beta-barrel proteins, including the association of TOM40 with the receptor TOM22 and small TOM proteins. Can associate with the SAM(core) complex as well as the MDM12-MMM1 complex, both involved in late steps of the major beta-barrel assembly pathway, that is responsible for biogenesis of all outer membrane beta-barrel proteins. May act as a switch that shuttles between both complexes and channels precursor proteins into the TOM40-specific pathway. Plays a role in mitochondrial morphology and in the inheritance of mitochondria. The protein is Mitochondrial distribution and morphology protein 10 of Cryptococcus neoformans var. neoformans serotype D (strain B-3501A) (Filobasidiella neoformans).